The primary structure comprises 234 residues: Proteasome subunit alpha (234 aa).

This sequence belongs to the peptidase T1A family. As to quaternary structure, the 20S proteasome core is composed of 14 alpha and 14 beta subunits that assemble into four stacked heptameric rings, resulting in a barrel-shaped structure. The two inner rings, each composed of seven catalytic beta subunits, are sandwiched by two outer rings, each composed of seven alpha subunits. The catalytic chamber with the active sites is on the inside of the barrel. Has a gated structure, the ends of the cylinder being occluded by the N-termini of the alpha-subunits. Is capped at one or both ends by the proteasome regulatory ATPase, PAN.

It localises to the cytoplasm. Its activity is regulated as follows. The formation of the proteasomal ATPase PAN-20S proteasome complex, via the docking of the C-termini of PAN into the intersubunit pockets in the alpha-rings, triggers opening of the gate for substrate entry. Interconversion between the open-gate and close-gate conformations leads to a dynamic regulation of the 20S proteasome proteolysis activity. Component of the proteasome core, a large protease complex with broad specificity involved in protein degradation. The protein is Proteasome subunit alpha of Picrophilus torridus (strain ATCC 700027 / DSM 9790 / JCM 10055 / NBRC 100828 / KAW 2/3).